A 318-amino-acid chain; its full sequence is Esterase FVEG_12639 (318 aa).

Residues Ser156, Asp255, and His285 contribute to the active site.

The protein belongs to the AB hydrolase 3 family.

Esterase; part of the Fusarium detoxification of benzoxazolinone cluster 2 (FDB2) involved in the degradation of benzoxazolinones produced by the host plant. Maize, wheat, and rye produce the 2 benzoxazinone phytoanticipins 2,4-dihy-droxy-7-methoxy-1,4-benzoxazin-3-one (DIMBOA) and 2,4-dihydroxy-1,4-benzoxazin-3-one (DIBOA) that, due to their inherent instability once released, spontaneously degrade to the more stable corresponding benzoxazolinones, 6-methoxy-2-benzoxazolinone (MBOA) and 2-benzoxazolinone (BOA), respectively. The first step in the detoxification of benzoxazolinones involves the hydrolysis of the cyclic ester bond of benzoxazolinones by the FDB1 cluster gamma-lactamase MBL1 to aminophenols. MBL1 is able to convert BOA into 2-aminophenol (2-AP), as well as MBOA into 5-methoxy-2-aminophenol (2-AMP). The FDB2 cluster N-malonyltransferase FDB2/NAT1 then metabolizes aminophenols via N-malonylation to non-toxic malonamic acids. FDB2/NAT1 converts 2-AP into N-(2-hydroxyphenyl) malonamic acid (HPMA) and 2-AMP into N-(2-hydroxy-4-methoxyphenyl) malonamic acid (HMPMA). The duplicated dienlactone hydrolases DLH1 and DLH2 may provide redundant function for hydrolyzing the lactone moiety in the BOA molecule. The roles of the amidases an other enzymes encoded by the 2 FDB clusters have not been identified so far. The chain is Esterase FVEG_12639 from Gibberella moniliformis (strain M3125 / FGSC 7600) (Maize ear and stalk rot fungus).